A 593-amino-acid chain; its full sequence is Salivary alpha-glucosidase (593 aa).

A signal peptide spans 1–19; that stretch reads MPPLGVLLLLVALGHSTQG. Positions 49, 51, 53, 55, 57, and 130 each coordinate Ca(2+). Asn-130 and Asn-163 each carry an N-linked (GlcNAc...) asparagine glycan. Ca(2+) contacts are provided by Asp-201, Tyr-235, Leu-236, and Glu-238. Residues Asn-295, Asn-310, Asn-338, Asn-414, Asn-445, and Asn-453 are each glycosylated (N-linked (GlcNAc...) asparagine). Position 338 (Asn-338) interacts with N-acetyl-beta-D-glucosamine.

It belongs to the glycosyl hydrolase 13 family. In terms of tissue distribution, saliva (at protein level). Proximal lateral lobes of the salivary gland (at protein level).

It is found in the secreted. It carries out the reaction Hydrolysis of terminal, non-reducing (1-&gt;4)-linked alpha-D-glucose residues with release of alpha-D-glucose.. Its function is as follows. Functions as a glucosidase that shows high activity toward sucrose, a major component of nectar. Assists the mosquito in its sugar-feeding capabilities. The sequence is that of Salivary alpha-glucosidase from Anopheles gambiae (African malaria mosquito).